The chain runs to 187 residues: UPF0301 protein YqgE (187 aa).

This sequence belongs to the UPF0301 (AlgH) family.

This is UPF0301 protein YqgE from Salmonella heidelberg (strain SL476).